The sequence spans 209 residues: Kynurenine formamidase (209 aa).

A substrate-binding site is contributed by tryptophan 19. Positions 49, 53, and 55 each coordinate Zn(2+). Histidine 59 functions as the Proton donor/acceptor in the catalytic mechanism. Residues histidine 160 and glutamate 172 each coordinate Zn(2+).

The protein belongs to the Cyclase 1 superfamily. KynB family. As to quaternary structure, homodimer. Zn(2+) serves as cofactor.

The catalysed reaction is N-formyl-L-kynurenine + H2O = L-kynurenine + formate + H(+). The protein operates within amino-acid degradation; L-tryptophan degradation via kynurenine pathway; L-kynurenine from L-tryptophan: step 2/2. Its function is as follows. Catalyzes the hydrolysis of N-formyl-L-kynurenine to L-kynurenine, the second step in the kynurenine pathway of tryptophan degradation. This Ralstonia nicotianae (strain ATCC BAA-1114 / GMI1000) (Ralstonia solanacearum) protein is Kynurenine formamidase.